The sequence spans 226 residues: ATP synthase F(0) complex subunit a (226 aa).

The next 6 helical transmembrane spans lie at 5 to 25 (LFAS…LIIL), 68 to 88 (WSLM…LGLL), 97 to 117 (QLSM…TTGF), 138 to 158 (IPML…ALAV), 160 to 180 (LTAN…ATLA), and 189 to 209 (TLII…VALI).

Belongs to the ATPase A chain family. As to quaternary structure, component of the ATP synthase complex composed at least of ATP5F1A/subunit alpha, ATP5F1B/subunit beta, ATP5MC1/subunit c (homooctomer), MT-ATP6/subunit a, MT-ATP8/subunit 8, ATP5ME/subunit e, ATP5MF/subunit f, ATP5MG/subunit g, ATP5MK/subunit k, ATP5MJ/subunit j, ATP5F1C/subunit gamma, ATP5F1D/subunit delta, ATP5F1E/subunit epsilon, ATP5PF/subunit F6, ATP5PB/subunit b, ATP5PD/subunit d, ATP5PO/subunit OSCP. ATP synthase complex consists of a soluble F(1) head domain (subunits alpha(3) and beta(3)) - the catalytic core - and a membrane F(0) domain - the membrane proton channel (subunits c, a, 8, e, f, g, k and j). These two domains are linked by a central stalk (subunits gamma, delta, and epsilon) rotating inside the F1 region and a stationary peripheral stalk (subunits F6, b, d, and OSCP). Interacts with DNAJC30; interaction is direct.

The protein localises to the mitochondrion inner membrane. The catalysed reaction is H(+)(in) = H(+)(out). Subunit a, of the mitochondrial membrane ATP synthase complex (F(1)F(0) ATP synthase or Complex V) that produces ATP from ADP in the presence of a proton gradient across the membrane which is generated by electron transport complexes of the respiratory chain. ATP synthase complex consist of a soluble F(1) head domain - the catalytic core - and a membrane F(1) domain - the membrane proton channel. These two domains are linked by a central stalk rotating inside the F(1) region and a stationary peripheral stalk. During catalysis, ATP synthesis in the catalytic domain of F(1) is coupled via a rotary mechanism of the central stalk subunits to proton translocation. With the subunit c (ATP5MC1), forms the proton-conducting channel in the F(0) domain, that contains two crucial half-channels (inlet and outlet) that facilitate proton movement from the mitochondrial intermembrane space (IMS) into the matrix. Protons are taken up via the inlet half-channel and released through the outlet half-channel, following a Grotthuss mechanism. The sequence is that of ATP synthase F(0) complex subunit a from Gorilla gorilla gorilla (Western lowland gorilla).